Here is a 287-residue protein sequence, read N- to C-terminus: Lipoyl synthase (287 aa).

[4Fe-4S] cluster-binding residues include C34, C39, C45, C60, C64, C67, and S273. The Radical SAM core domain maps to W46–L262.

Belongs to the radical SAM superfamily. Lipoyl synthase family. The cofactor is [4Fe-4S] cluster.

Its subcellular location is the cytoplasm. It carries out the reaction [[Fe-S] cluster scaffold protein carrying a second [4Fe-4S](2+) cluster] + N(6)-octanoyl-L-lysyl-[protein] + 2 oxidized [2Fe-2S]-[ferredoxin] + 2 S-adenosyl-L-methionine + 4 H(+) = [[Fe-S] cluster scaffold protein] + N(6)-[(R)-dihydrolipoyl]-L-lysyl-[protein] + 4 Fe(3+) + 2 hydrogen sulfide + 2 5'-deoxyadenosine + 2 L-methionine + 2 reduced [2Fe-2S]-[ferredoxin]. It functions in the pathway protein modification; protein lipoylation via endogenous pathway; protein N(6)-(lipoyl)lysine from octanoyl-[acyl-carrier-protein]: step 2/2. Catalyzes the radical-mediated insertion of two sulfur atoms into the C-6 and C-8 positions of the octanoyl moiety bound to the lipoyl domains of lipoate-dependent enzymes, thereby converting the octanoylated domains into lipoylated derivatives. The sequence is that of Lipoyl synthase from Wolbachia sp. subsp. Brugia malayi (strain TRS).